A 344-amino-acid chain; its full sequence is Protein RecA (344 aa).

Position 65–72 (65–72) interacts with ATP; that stretch reads GPESSGKT. Residues 323–337 show a composition bias toward basic and acidic residues; sequence ELREKFQPAEAPREA. Positions 323–344 are disordered; that stretch reads ELREKFQPAEAPREAGDDEDKE.

It belongs to the RecA family.

The protein resides in the cytoplasm. Its function is as follows. Can catalyze the hydrolysis of ATP in the presence of single-stranded DNA, the ATP-dependent uptake of single-stranded DNA by duplex DNA, and the ATP-dependent hybridization of homologous single-stranded DNAs. It interacts with LexA causing its activation and leading to its autocatalytic cleavage. This chain is Protein RecA, found in Xanthomonas euvesicatoria pv. vesicatoria (strain 85-10) (Xanthomonas campestris pv. vesicatoria).